Reading from the N-terminus, the 66-residue chain is Large ribosomal subunit protein bL35 (66 aa).

It belongs to the bacterial ribosomal protein bL35 family.

This Brucella canis (strain ATCC 23365 / NCTC 10854 / RM-666) protein is Large ribosomal subunit protein bL35.